A 78-amino-acid chain; its full sequence is UPF0270 protein IL0325 (78 aa).

Belongs to the UPF0270 family.

The protein is UPF0270 protein IL0325 of Idiomarina loihiensis (strain ATCC BAA-735 / DSM 15497 / L2-TR).